The chain runs to 618 residues: Structural protein ORF618 (618 aa).

A coiled-coil region spans residues 570-598; the sequence is ILEAKRQIEDRAKGLSKNLDNTVTEIMNA.

The protein resides in the virion. The polypeptide is Structural protein ORF618 (Acidianus two-tailed virus (ATV)).